The chain runs to 75 residues: Iota-conotoxin-like R11.3 (75 aa).

The signal sequence occupies residues 1 to 19 (MKLCLTFLLVLMILASVTG). Positions 20-34 (EKLSEQTLRRAARKN) are excised as a propeptide. Intrachain disulfides connect Cys-39–Cys-53, Cys-46–Cys-58, Cys-52–Cys-63, and Cys-57–Cys-70.

It belongs to the conotoxin I1 superfamily. As to expression, expressed by the venom duct.

Its subcellular location is the secreted. Iota-conotoxins bind to voltage-gated sodium channels (Nav) and act as agonists by shifting the voltage-dependence of activation to more hyperpolarized levels. Produces general excitatory symptoms. The polypeptide is Iota-conotoxin-like R11.3 (Conus radiatus (Rayed cone)).